A 419-amino-acid polypeptide reads, in one-letter code: Synaptic vesicle membrane protein VAT-1 homolog-like (419 aa).

The span at 1-25 (MAKEGVEKAEETEQMIEKEAGKEPA) shows a compositional bias: basic and acidic residues. Disordered stretches follow at residues 1–36 (MAKE…SHRL) and 384–419 (PTPL…PFIQ). Residue Ser-392 is modified to Phosphoserine. 2 positions are modified to phosphothreonine: Thr-393 and Thr-395. Ser-396 carries the phosphoserine modification. The span at 397-407 (EAGEEEEDHEG) shows a compositional bias: acidic residues. Residues 408-419 (DSENKERMPFIQ) show a composition bias toward basic and acidic residues.

Belongs to the zinc-containing alcohol dehydrogenase family. Quinone oxidoreductase subfamily. In terms of tissue distribution, detected in skin fibroblasts.

This chain is Synaptic vesicle membrane protein VAT-1 homolog-like (VAT1L), found in Homo sapiens (Human).